Here is a 916-residue protein sequence, read N- to C-terminus: Isoleucine--tRNA ligase (916 aa).

Positions 57–67 (PYANGNLHMGH) match the 'HIGH' region motif. Residue Glu554 participates in L-isoleucyl-5'-AMP binding. Residues 595–599 (KMSKS) carry the 'KMSKS' region motif. Residue Lys598 participates in ATP binding. The Zn(2+) site is built by Cys885, Cys888, Cys905, and Cys908.

This sequence belongs to the class-I aminoacyl-tRNA synthetase family. IleS type 1 subfamily. As to quaternary structure, monomer. Zn(2+) serves as cofactor.

It is found in the cytoplasm. It catalyses the reaction tRNA(Ile) + L-isoleucine + ATP = L-isoleucyl-tRNA(Ile) + AMP + diphosphate. Its function is as follows. Catalyzes the attachment of isoleucine to tRNA(Ile). As IleRS can inadvertently accommodate and process structurally similar amino acids such as valine, to avoid such errors it has two additional distinct tRNA(Ile)-dependent editing activities. One activity is designated as 'pretransfer' editing and involves the hydrolysis of activated Val-AMP. The other activity is designated 'posttransfer' editing and involves deacylation of mischarged Val-tRNA(Ile). The sequence is that of Isoleucine--tRNA ligase from Staphylococcus saprophyticus subsp. saprophyticus (strain ATCC 15305 / DSM 20229 / NCIMB 8711 / NCTC 7292 / S-41).